The primary structure comprises 458 residues: Argininosuccinate lyase (458 aa).

Belongs to the lyase 1 family. Argininosuccinate lyase subfamily.

It localises to the cytoplasm. The enzyme catalyses 2-(N(omega)-L-arginino)succinate = fumarate + L-arginine. Its pathway is amino-acid biosynthesis; L-arginine biosynthesis; L-arginine from L-ornithine and carbamoyl phosphate: step 3/3. This chain is Argininosuccinate lyase, found in Geobacter sp. (strain M21).